The primary structure comprises 150 residues: Transmembrane protein 35B (150 aa).

The signal sequence occupies residues 1 to 21 (MSFRVGVLRVLLGVFFALTGA). A run of 3 helical transmembrane segments spans residues 62 to 82 (TAVG…PPVL), 84 to 104 (EISN…LVVL), and 111 to 131 (YVPA…HFLA).

The protein belongs to the DoxX family.

The protein resides in the membrane. The chain is Transmembrane protein 35B from Mus musculus (Mouse).